The chain runs to 387 residues: 1-deoxy-D-xylulose 5-phosphate reductoisomerase (387 aa).

NADPH-binding residues include T11, G12, S13, I14, G37, R38, N39, and N125. 1-deoxy-D-xylulose 5-phosphate is bound at residue K126. E127 lines the NADPH pocket. Residue D151 participates in Mn(2+) binding. Positions 152, 153, 177, and 200 each coordinate 1-deoxy-D-xylulose 5-phosphate. A Mn(2+)-binding site is contributed by E153. G206 is a binding site for NADPH. 1-deoxy-D-xylulose 5-phosphate contacts are provided by S213, N218, K219, and E222. E222 serves as a coordination point for Mn(2+).

This sequence belongs to the DXR family. Requires Mg(2+) as cofactor. It depends on Mn(2+) as a cofactor.

It catalyses the reaction 2-C-methyl-D-erythritol 4-phosphate + NADP(+) = 1-deoxy-D-xylulose 5-phosphate + NADPH + H(+). It functions in the pathway isoprenoid biosynthesis; isopentenyl diphosphate biosynthesis via DXP pathway; isopentenyl diphosphate from 1-deoxy-D-xylulose 5-phosphate: step 1/6. Catalyzes the NADPH-dependent rearrangement and reduction of 1-deoxy-D-xylulose-5-phosphate (DXP) to 2-C-methyl-D-erythritol 4-phosphate (MEP). The sequence is that of 1-deoxy-D-xylulose 5-phosphate reductoisomerase from Desulforamulus reducens (strain ATCC BAA-1160 / DSM 100696 / MI-1) (Desulfotomaculum reducens).